Reading from the N-terminus, the 739-residue chain is Bifunctional (p)ppGpp synthase/hydrolase RelA (739 aa).

The 100-residue stretch at 50-149 (YIVHPIQVAG…VKLADRLHNM (100 aa)) folds into the HD domain. The Mn(2+) site is built by H53 and H77. Residues E81 and D82 each act as nucleophile, for hydrolase activity in the active site. D144 provides a ligand contact to Mn(2+). D264 serves as a coordination point for Mg(2+). The 62-residue stretch at 393-454 (ERIYVFTPTG…KTGDVVEIVT (62 aa)) folds into the TGS domain. The 76-residue stretch at 664-739 (EIDIYGLNRR…DVYSVKRTNG (76 aa)) folds into the ACT domain.

It belongs to the RelA/SpoT family. It depends on Mg(2+) as a cofactor. Mn(2+) is required as a cofactor.

The enzyme catalyses GTP + ATP = guanosine 3'-diphosphate 5'-triphosphate + AMP. It carries out the reaction guanosine 3',5'-bis(diphosphate) + H2O = GDP + diphosphate + H(+). The protein operates within purine metabolism; ppGpp biosynthesis; ppGpp from GDP: step 1/1. It functions in the pathway purine metabolism; ppGpp biosynthesis; ppGpp from GTP: step 1/2. With respect to regulation, alpha-beta methylenyl ATP, an ATP-analog inhibitor of the synthase activity also reduces the hydrolase activity about 4-fold. In eubacteria ppGpp (guanosine 3'-diphosphate 5'-diphosphate) is a mediator of the stringent response that coordinates a variety of cellular activities in response to changes in nutritional abundance. This enzyme catalyzes both the formation of pppGpp which is then hydrolyzed to form ppGpp, and the hydrolysis of ppGpp. The enzyme does not simultaneously display both synthase and hydrolase activities. In the structure of residues 1-385 there are 2 conformations seen, the hydrolase-OFF/synthase-ON and hydrolase-ON/synthase-OFF, suggesting there is ligand-induced signal transmission between the 2 active sites. The polypeptide is Bifunctional (p)ppGpp synthase/hydrolase RelA (relA) (Streptococcus dysgalactiae subsp. equisimilis (Streptococcus equisimilis)).